Here is a 219-residue protein sequence, read N- to C-terminus: Proteasome subunit beta 2 (219 aa).

The propeptide at 1–25 is removed in mature form; by autocatalysis; that stretch reads MAEWIAGGLEGPAGRGLDERVVRSG. Threonine 26 acts as the Nucleophile in catalysis.

This sequence belongs to the peptidase T1B family. As to quaternary structure, the 20S proteasome core is composed of 14 alpha and 14 beta subunits that assemble into four stacked heptameric rings, resulting in a barrel-shaped structure. The two inner rings, each composed of seven catalytic beta subunits, are sandwiched by two outer rings, each composed of seven alpha subunits. The catalytic chamber with the active sites is on the inside of the barrel. Has a gated structure, the ends of the cylinder being occluded by the N-termini of the alpha-subunits. Is capped at one or both ends by the proteasome regulatory ATPase, PAN.

The protein resides in the cytoplasm. It carries out the reaction Cleavage of peptide bonds with very broad specificity.. Its activity is regulated as follows. The formation of the proteasomal ATPase PAN-20S proteasome complex, via the docking of the C-termini of PAN into the intersubunit pockets in the alpha-rings, triggers opening of the gate for substrate entry. Interconversion between the open-gate and close-gate conformations leads to a dynamic regulation of the 20S proteasome proteolysis activity. Its function is as follows. Component of the proteasome core, a large protease complex with broad specificity involved in protein degradation. The polypeptide is Proteasome subunit beta 2 (Aeropyrum pernix (strain ATCC 700893 / DSM 11879 / JCM 9820 / NBRC 100138 / K1)).